Consider the following 133-residue polypeptide: Profilin-1 (133 aa).

The protein belongs to the profilin family. As to quaternary structure, occurs in many kinds of cells as a complex with monomeric actin in a 1:1 ratio. In terms of tissue distribution, ubiquitous.

Its subcellular location is the cytoplasm. The protein resides in the cytoskeleton. Functionally, binds to actin and affects the structure of the cytoskeleton. At high concentrations, profilin prevents the polymerization of actin, whereas it enhances it at low concentrations. By binding to PIP2, it inhibits the formation of IP3 and DG. This Solanum lycopersicum (Tomato) protein is Profilin-1 (PRO1).